We begin with the raw amino-acid sequence, 424 residues long: CinA-like protein (424 aa).

This sequence belongs to the CinA family.

In Prochlorococcus marinus (strain MIT 9312), this protein is CinA-like protein.